A 394-amino-acid chain; its full sequence is Elongation factor Tu (394 aa).

The 195-residue stretch at 10-204 (KPHVNVGTIG…ALDRYIPTPE (195 aa)) folds into the tr-type G domain. Residues 19 to 26 (GHVDHGKT) form a G1 region. 19–26 (GHVDHGKT) is a binding site for GTP. Threonine 26 lines the Mg(2+) pocket. The segment at 60-64 (GITIN) is G2. Positions 81-84 (DCPG) are G3. GTP contacts are provided by residues 81–85 (DCPGH) and 136–139 (NKCD). The interval 136 to 139 (NKCD) is G4. The tract at residues 174 to 176 (SAL) is G5.

This sequence belongs to the TRAFAC class translation factor GTPase superfamily. Classic translation factor GTPase family. EF-Tu/EF-1A subfamily. Monomer.

The protein resides in the cytoplasm. The enzyme catalyses GTP + H2O = GDP + phosphate + H(+). Its function is as follows. GTP hydrolase that promotes the GTP-dependent binding of aminoacyl-tRNA to the A-site of ribosomes during protein biosynthesis. The chain is Elongation factor Tu from Neisseria gonorrhoeae.